Here is a 137-residue protein sequence, read N- to C-terminus: Glutamate mutase sigma subunit (137 aa).

Positions 3-137 (KKTIVLGVIG…ADLKKDLNIE (135 aa)) constitute a B12-binding domain. Adenosylcob(III)alamin is bound by residues 13-17 (SDCHA), His16, 61-63 (SSL), and 93-97 (NIVVG).

It belongs to the methylaspartate mutase GlmS subunit family. As to quaternary structure, heterotetramer composed of 2 epsilon subunits (GlmE) and 2 sigma subunits (GlmS). GlmE exists as a homodimer and GlmS as a monomer. Adenosylcob(III)alamin serves as cofactor.

It catalyses the reaction (2S,3S)-3-methyl-L-aspartate = L-glutamate. It functions in the pathway amino-acid degradation; L-glutamate degradation via mesaconate pathway; acetate and pyruvate from L-glutamate: step 1/4. With respect to regulation, competitively inhibited by (2S,4S)-4-fluoroglutamate, 2-methyleneglutarate, (2R,3RS)-3-fluoroglutamate and (S)-3-methylitaconate. In terms of biological role, catalyzes the carbon skeleton rearrangement of L-glutamate to L-threo-3-methylaspartate ((2S,3S)-3-methylaspartate). The polypeptide is Glutamate mutase sigma subunit (Clostridium cochlearium).